The chain runs to 350 residues: Chemokine C-C motif receptor-like 2 (350 aa).

The Extracellular portion of the chain corresponds to 1–43; sequence MANYTSAPEDDYDVFIEDDLSNDERELCSPYDPQALLAQLVPY. Asn3 carries N-linked (GlcNAc...) asparagine glycosylation. Residues 44 to 64 traverse the membrane as a helical segment; it reads LFITVFLVGLLDNILVVLIMV. At 65–74 the chain is on the cytoplasmic side; sequence KYKGLKQVEN. The chain crosses the membrane as a helical span at residues 75–95; that stretch reads IYLLNLAVCNLCFLCTLPFWV. Topologically, residues 96–110 are extracellular; it reads HMAWHEGDPGEPLCK. An intrachain disulfide couples Cys109 to Cys187. Residues 111–131 traverse the membrane as a helical segment; sequence ILLVLYSVGLFSEAFFNVLLT. At 132–149 the chain is on the cytoplasmic side; that stretch reads VQRYQKFFQMRGFFSATR. Residues 150–170 form a helical membrane-spanning segment; that stretch reads MVAGSIFPSALVWVIAVLVML. Residues 171-204 are Extracellular-facing; that stretch reads PELAFYKPQMENQKYKCFFGRPLFLPADETFWKH. Residues 205 to 225 traverse the membrane as a helical segment; the sequence is FLTLKMNILGFLLPLFVFVFC. Residues 226–244 are Cytoplasmic-facing; sequence YVRMRRTLKFGERGYDLFK. Residues 245–265 traverse the membrane as a helical segment; it reads LVFTIMVVFLLMWGPYNIALF. At 266 to 288 the chain is on the extracellular side; sequence LSAFNEHFSLHGCESSHNLDRST. Residues 289–309 form a helical membrane-spanning segment; sequence LITKIIATTHCCVNPLLYVFF. The Cytoplasmic portion of the chain corresponds to 310–350; sequence DEAFRKHLYHFCHLCNDTAPQPTEEPAQGTSREEPCLSTKM. Residues 329–350 form a disordered region; sequence PQPTEEPAQGTSREEPCLSTKM.

This sequence belongs to the G-protein coupled receptor 1 family.

It localises to the cell membrane. Its function is as follows. Receptor for CCL19 and chemerin/RARRES2. Does not appear to be a signaling receptor, but may have a role in modulating chemokine-triggered immune responses by capturing and internalizing CCL19 or by presenting RARRES2 ligand to CMKLR1, a functional signaling receptor. Plays a critical role for the development of Th2 responses. The polypeptide is Chemokine C-C motif receptor-like 2 (CCRL2) (Sus scrofa (Pig)).